The following is a 27-amino-acid chain: Trypsin inhibitor 1 (27 aa).

In terms of assembly, homodimer. In terms of processing, contains disulfide bonds. Post-translationally, glycosylated.

Inhibits trypsin (IC(50)=1.25 uM) but not chymotrypsin or papain. Has antibacterial activity against S.enterica ATCC 10708 (MIC=5 ug/ml) and S.aureus ATCC 25923 (MIC=5 ug/ml) but not against B.subtilis ATCC 6633 or P.aeruginosa ATCC 25619. Has no hemolytic activity against human erythrocytes. Is not toxic to mice. This Jatropha curcas (Barbados nut) protein is Trypsin inhibitor 1.